The chain runs to 602 residues: Cholinesterase (602 aa).

The first 28 residues, 1-28 (MQSRSTVIYIRFVLWFLLLWVLFEKSHT), serve as a signal peptide directing secretion. Asn-85 and Asn-134 each carry an N-linked (GlcNAc...) asparagine glycan. 144-145 (GS) lines the substrate pocket. The active-site Acyl-ester intermediate is the Ser-226. Position 226 is a phosphoserine (Ser-226). Asn-269 and Asn-284 each carry an N-linked (GlcNAc...) asparagine glycan. Catalysis depends on Glu-353, which acts as the Charge relay system. Asn-369 carries N-linked (GlcNAc...) asparagine glycosylation. His-466 (charge relay system) is an active-site residue. 4 N-linked (GlcNAc...) asparagine glycosylation sites follow: Asn-483, Asn-509, Asn-513, and Asn-514.

It belongs to the type-B carboxylesterase/lipase family. Homotetramer; disulfide-linked. Dimer of dimers. Present in most cells except erythrocytes.

The protein resides in the secreted. The enzyme catalyses an acylcholine + H2O = a carboxylate + choline + H(+). In terms of biological role, esterase with broad substrate specificity. Contributes to the inactivation of the neurotransmitter acetylcholine. Can degrade neurotoxic organophosphate esters. In Bos taurus (Bovine), this protein is Cholinesterase (BCHE).